A 389-amino-acid polypeptide reads, in one-letter code: Chalcone synthase 1 (389 aa).

Cys164 is a catalytic residue.

This sequence belongs to the thiolase-like superfamily. Chalcone/stilbene synthases family.

It carries out the reaction (E)-4-coumaroyl-CoA + 3 malonyl-CoA + 3 H(+) = 2',4,4',6'-tetrahydroxychalcone + 3 CO2 + 4 CoA. Its pathway is secondary metabolite biosynthesis; flavonoid biosynthesis. Its function is as follows. The primary product of this enzyme is 4,2',4',6'-tetrahydroxychalcone (also termed naringenin-chalcone or chalcone) which can under specific conditions spontaneously isomerize into naringenin. In Solanum lycopersicum (Tomato), this protein is Chalcone synthase 1 (CHS1).